The following is a 426-amino-acid chain: Enolase (426 aa).

Glutamine 163 is a binding site for (2R)-2-phosphoglycerate. Catalysis depends on glutamate 205, which acts as the Proton donor. Mg(2+) contacts are provided by aspartate 242, glutamate 286, and aspartate 313. 4 residues coordinate (2R)-2-phosphoglycerate: lysine 338, arginine 367, serine 368, and lysine 389. Lysine 338 functions as the Proton acceptor in the catalytic mechanism.

The protein belongs to the enolase family. Mg(2+) serves as cofactor.

The protein localises to the cytoplasm. It localises to the secreted. Its subcellular location is the cell surface. It catalyses the reaction (2R)-2-phosphoglycerate = phosphoenolpyruvate + H2O. It participates in carbohydrate degradation; glycolysis; pyruvate from D-glyceraldehyde 3-phosphate: step 4/5. In terms of biological role, catalyzes the reversible conversion of 2-phosphoglycerate (2-PG) into phosphoenolpyruvate (PEP). It is essential for the degradation of carbohydrates via glycolysis. The chain is Enolase from Helicobacter pylori (strain P12).